Consider the following 33-residue polypeptide: Mu-theraphotoxin-Os1a (33 aa).

3 cysteine pairs are disulfide-bonded: Cys-2–Cys-17, Cys-9–Cys-22, and Cys-16–Cys-29. Leu-33 is modified (leucine amide).

This sequence belongs to the neurotoxin 10 (Hwtx-1) family. 14 (Hntx-1) subfamily. As to quaternary structure, monomer. As to expression, expressed by the venom gland.

It localises to the secreted. In terms of biological role, potently and reversibly inhibits some human voltage-gated sodium channels (Nav1.1/SCN1A (IC(50)=72.0 nM), Nav1.2/SCN2A (IC(50)=75.5 nM), Nav1.6/SCN8A (IC(50)=115.0 nM), Nav1.7/SCN9A (IC(50)=52.7-129.5 nM), Nav1.3/SCN3A (IC(50)=306.6 nM)). The hNav1.7/SCN9A channel inhibition occurs without any change in steady-state inactivation- and conductance-voltage relationships. On adult mouse DRG neurons, this toxin is approximately 1000-fold more efficient to inhibit tetrodotoxin (TTX)-sensitive than TTX-resistant sodium currents. In vivo, this toxin exhibits analgesic effects in mice pain models. This Omothymus schioedtei (Malaysian earth tiger tarantula) protein is Mu-theraphotoxin-Os1a.